Consider the following 276-residue polypeptide: Shikimate dehydrogenase (NADP(+)) (276 aa).

Shikimate-binding positions include 19 to 21 (SKS) and T66. Catalysis depends on K70, which acts as the Proton acceptor. An NADP(+)-binding site is contributed by D82. Shikimate is bound by residues N91 and D107. Residues 133–137 (GAGGA), 157–162 (NRTRSR), and L222 each bind NADP(+). Shikimate is bound at residue Y224. G245 provides a ligand contact to NADP(+).

The protein belongs to the shikimate dehydrogenase family. Homodimer.

It carries out the reaction shikimate + NADP(+) = 3-dehydroshikimate + NADPH + H(+). It participates in metabolic intermediate biosynthesis; chorismate biosynthesis; chorismate from D-erythrose 4-phosphate and phosphoenolpyruvate: step 4/7. Its function is as follows. Involved in the biosynthesis of the chorismate, which leads to the biosynthesis of aromatic amino acids. Catalyzes the reversible NADPH linked reduction of 3-dehydroshikimate (DHSA) to yield shikimate (SA). In Ruegeria sp. (strain TM1040) (Silicibacter sp.), this protein is Shikimate dehydrogenase (NADP(+)).